Consider the following 347-residue polypeptide: ATP-dependent (S)-NAD(P)H-hydrate dehydratase (347 aa).

The YjeF C-terminal domain occupies 53-344 (TLQLVRNIIP…AEVGAAFSKL (292 aa)). Tyrosine 85 is subject to Phosphotyrosine. Residues glycine 153 and 206 to 212 (NHVEFSR) each bind (6S)-NADPHX. Asparagine 240 carries an N-linked (GlcNAc...) asparagine glycan. ATP contacts are provided by residues 246 to 250 (KGERD) and 265 to 274 (GSSRRCGGQG). Aspartate 275 provides a ligand contact to (6S)-NADPHX. The N-linked (GlcNAc...) asparagine glycan is linked to asparagine 297.

Belongs to the NnrD/CARKD family. It depends on Mg(2+) as a cofactor.

It localises to the mitochondrion. It carries out the reaction (6S)-NADHX + ATP = ADP + phosphate + NADH + H(+). It catalyses the reaction (6S)-NADPHX + ATP = ADP + phosphate + NADPH + H(+). Catalyzes the dehydration of the S-form of NAD(P)HX at the expense of ATP, which is converted to ADP. Together with NAD(P)HX epimerase, which catalyzes the epimerization of the S- and R-forms, the enzyme allows the repair of both epimers of NAD(P)HX, a damaged form of NAD(P)H that is a result of enzymatic or heat-dependent hydration. The polypeptide is ATP-dependent (S)-NAD(P)H-hydrate dehydratase (Homo sapiens (Human)).